The sequence spans 440 residues: MSEMTPREIVQELDKYIIGQDAAKRSVAIALRNRWRRMQVDEALQPEITPKNILMIGPTGVGKTEIARRLAKLARAPFIKIEATKFTEVGYVGRDVESIIRDLVDIAIKLVREEAMERVQHQAADAAEDRVLDIMLPRAQSFDQEDPSAGTRQKLRKKLREGALDDREIEVELRASPMGVEIMAPPGMEEMTNQLQQMFQNFGGEKTKRRKMKVKDALEVLKDEEAARLVNDEDLKAEAVERVEQNAIVFLDEIDKVCKRAEQGTGGDVSREGVQRDLLPLVEGSTVSTKHGMVRTDHILFIASGAFHLSKPSDLIPELQGRLPIRVELEALTTDDFVRILSEPSASLVHQYQALIATEGCELEFTEDGIRRVAEVAWEVNSRTENIGARRLHTVMERLLEEISYSAADRGGQQVTVDADYVDQHLGGLVQDEDLSRYIL.

Residues isoleucine 18 and 60-65 (GVGKTE) contribute to the ATP site. A disordered region spans residues 138 to 159 (RAQSFDQEDPSAGTRQKLRKKL). Residues aspartate 252, glutamate 318, and arginine 390 each contribute to the ATP site.

It belongs to the ClpX chaperone family. HslU subfamily. A double ring-shaped homohexamer of HslV is capped on each side by a ring-shaped HslU homohexamer. The assembly of the HslU/HslV complex is dependent on binding of ATP.

The protein localises to the cytoplasm. In terms of biological role, ATPase subunit of a proteasome-like degradation complex; this subunit has chaperone activity. The binding of ATP and its subsequent hydrolysis by HslU are essential for unfolding of protein substrates subsequently hydrolyzed by HslV. HslU recognizes the N-terminal part of its protein substrates and unfolds these before they are guided to HslV for hydrolysis. The chain is ATP-dependent protease ATPase subunit HslU from Alkalilimnicola ehrlichii (strain ATCC BAA-1101 / DSM 17681 / MLHE-1).